Reading from the N-terminus, the 776-residue chain is Photosystem I P700 chlorophyll a apoprotein A1 (776 aa).

The next 8 helical transmembrane spans lie at 76–99 (IFSAHFGHLAIVFIWMSGAFFHGA), 162–185 (LMALATGALIMAALVLHGGIFHYH), 201–225 (LQHHQIGLFGLGSLGWTGHLIHVAN), 309–327 (VAHHHLAWAVFLMFGGHVY), 368–391 (WHAQLAVNLACIGSGSIVVAHHMY), 407–433 (LGLFTHHMWIGGLMICGAAAHAGIAVI), 455–477 (AIISHLNWVCMFLGFHSFGLYIH), and 557–575 (LMIHHIHAFTIHVTCLILL). The [4Fe-4S] cluster site is built by cysteine 599 and cysteine 608. Helical transmembrane passes span 615–636 (HVFLGLFWMYNSLSMVIFYFSW) and 690–712 (LSGYGLLFLGGHFVWAFSLMFLF). Histidine 701 serves as a coordination point for divinylchlorophyll a'. Divinyl chlorophyll a contacts are provided by methionine 709 and tyrosine 717. Tryptophan 718 is a binding site for phylloquinone. The helical transmembrane segment at 750-770 (AVGVTHFLFGGIVTTWAFFHA) threads the bilayer.

Belongs to the PsaA/PsaB family. As to quaternary structure, the PsaA/B heterodimer binds the P700 chlorophyll special pair and subsequent electron acceptors. PSI consists of a core antenna complex that captures photons, and an electron transfer chain that converts photonic excitation into a charge separation. The cyanobacterial PSI reaction center is composed of one copy each of PsaA,B,C,D,E,F,I,J,K,L,M and X, and forms trimeric complexes. The cofactor is PSI electron transfer chain: 5 divinyl chlorophyll a, 1 divinyl chlorophyll a', 2 phylloquinones and 3 4Fe-4S clusters. PSI core antenna: 90 divinyl chlorophyll a, 22 carotenoids, 3 phospholipids and 1 galactolipid. P700 is a divinyl chlorophyll a/divinyl chlorophyll a' dimer, A0 is one or more chlorophyll divinyl a, A1 is one or both phylloquinones and FX is a shared 4Fe-4S iron-sulfur center..

It localises to the cellular thylakoid membrane. It catalyses the reaction reduced [plastocyanin] + hnu + oxidized [2Fe-2S]-[ferredoxin] = oxidized [plastocyanin] + reduced [2Fe-2S]-[ferredoxin]. Its function is as follows. PsaA and PsaB bind P700, the primary electron donor of photosystem I (PSI), as well as the electron acceptors A0, A1 and FX. PSI is a plastocyanin/cytochrome c6-ferredoxin oxidoreductase, converting photonic excitation into a charge separation, which transfers an electron from the donor P700 chlorophyll pair to the spectroscopically characterized acceptors A0, A1, FX, FA and FB in turn. Oxidized P700 is reduced on the lumenal side of the thylakoid membrane by plastocyanin or cytochrome c6. In Prochlorococcus marinus (strain MIT 9313), this protein is Photosystem I P700 chlorophyll a apoprotein A1.